Here is a 471-residue protein sequence, read N- to C-terminus: Type 2 glycosyltransferase (471 aa).

The chain crosses the membrane as a helical span at residues 4 to 24 (ILGWFWAFVSAFVLRYLRTIV). Residues Asn29, Asn88, and Asn222 are each glycosylated (N-linked (GlcNAc...) asparagine). A run of 3 helical transmembrane segments spans residues 305-325 (CLQT…FYSL), 339-359 (MAFT…KLWG), and 368-388 (VIYI…KFWG). Asn458 carries N-linked (GlcNAc...) asparagine glycosylation.

The protein belongs to the GT2 glycosyltransferase family.

The protein localises to the cell membrane. Its function is as follows. Glycosyltransferase involved in the maintenance of the outermost surface of the fungal cell wall. Likely functions in the synthesis of a currently unknown, potentially minor but widespread, extracellular or outer cell wall polysaccharide which plays a key role in facilitating many interactions between plants and fungi by enabling hyphal growth on solid matrices. In Zymoseptoria tritici (strain CBS 115943 / IPO323) (Speckled leaf blotch fungus), this protein is Type 2 glycosyltransferase.